Consider the following 275-residue polypeptide: Replication protein A 32 kDa subunit (275 aa).

Residues 23–47 form a disordered region; the sequence is MQSPGGFGSPAPTQGEKKSRSRSQQ. A DNA-binding region (OB) is located at residues 76–150; the sequence is VTIVGIVRHA…KSVVAFKIAP (75 aa).

The protein belongs to the replication factor A protein 2 family. As to quaternary structure, component of the replication protein A complex (RPA/RP-A), a heterotrimeric complex composed of RPA1, RPA2 and RPA3. Differentially phosphorylated throughout the cell cycle, becoming phosphorylated at the G1-S transition and dephosphorylated in late mitosis. Phosphorylation increases upon replication fork stalling.

It is found in the nucleus. The protein resides in the PML body. In terms of biological role, as part of the heterotrimeric replication protein A complex (RPA/RP-A), binds and stabilizes single-stranded DNA intermediates, that form during DNA replication or upon DNA stress. It prevents their reannealing and in parallel, recruits and activates different proteins and complexes involved in DNA metabolism. Thereby, it plays an essential role both in DNA replication and the cellular response to DNA damage. The protein is Replication protein A 32 kDa subunit (rpa2) of Xenopus tropicalis (Western clawed frog).